Here is a 168-residue protein sequence, read N- to C-terminus: MADYYNVGKVTSPHGIRGEIKVYPLTNVPERFYDIPYIWVFDEKDIPCKYEIENVKITSKGMVLLKLKGIDSRNDAEKLKGLFLKVDAENALKLEEDEYFITDLIGMKVYTEEGELIGTLEEVLQTGANDVYVVKAKEREVLLPAIKEVIKKVDVEGKVMIVRLLEGL.

One can recognise a PRC barrel domain in the interval glutamate 96–leucine 168.

This sequence belongs to the RimM family. As to quaternary structure, binds ribosomal protein uS19.

Its subcellular location is the cytoplasm. An accessory protein needed during the final step in the assembly of 30S ribosomal subunit, possibly for assembly of the head region. Essential for efficient processing of 16S rRNA. May be needed both before and after RbfA during the maturation of 16S rRNA. It has affinity for free ribosomal 30S subunits but not for 70S ribosomes. The chain is Ribosome maturation factor RimM from Caldanaerobacter subterraneus subsp. tengcongensis (strain DSM 15242 / JCM 11007 / NBRC 100824 / MB4) (Thermoanaerobacter tengcongensis).